The primary structure comprises 759 residues: uncharacterized protein (759 aa).

3 stretches are compositionally biased toward low complexity: residues 1–36, 142–211, and 221–347; these read MSSNNNFDNNKNNNNNNNSNQNNNNIDNGGNNNETN, QQQN…NQHH, and NHSN…GSSS. Disordered regions lie at residues 1–47, 142–380, 409–428, 463–504, and 654–759; these read MSSN…AQTP, QQQN…PSIG, NNNCTESNDDDSPLNGGLGY, IING…NFEN, and LVDD…YLNK. Over residues 348–360 the composition is skewed to polar residues; it reads PFQDQARSPSSSF. Low complexity-rich tracts occupy residues 463–495 and 660–747; these read IINGFNKNNNNNNNNNNNNNNSNNNNNNNGNNN and HISN…DNNN.

This is an uncharacterized protein from Dictyostelium discoideum (Social amoeba).